Here is an 85-residue protein sequence, read N- to C-terminus: Toxin TdNa8 (85 aa).

The first 19 residues, 1–19, serve as a signal peptide directing secretion; sequence MNYLTLIAAASLLTAGTES. Residues 21 to 81 enclose the LCN-type CS-alpha/beta domain; sequence KDGYPVKEGD…AAIKGYGRCR (61 aa). 4 disulfide bridges follow: C31/C80, C35/C56, C42/C63, and C46/C65. Residue P82 is modified to Proline amide.

Belongs to the long (4 C-C) scorpion toxin superfamily. Sodium channel inhibitor family. Alpha subfamily. In terms of tissue distribution, expressed by the venom gland.

It localises to the secreted. Its function is as follows. Alpha toxins bind voltage-independently at site-3 of sodium channels (Nav) and inhibit the inactivation of the activated channels, thereby blocking neuronal transmission. The protein is Toxin TdNa8 of Tityus discrepans (Venezuelan scorpion).